The chain runs to 387 residues: Queuine tRNA-ribosyltransferase (387 aa).

The active-site Proton acceptor is Asp105. Residues 105 to 109 (DSGGF), Asp177, and Gly248 each bind substrate. An RNA binding region spans residues 278–284 (GIGDLPS). The active-site Nucleophile is Asp297. An RNA binding; important for wobble base 34 recognition region spans residues 302-306 (TRAAR). 4 residues coordinate Zn(2+): Cys335, Cys337, Cys340, and His366.

Belongs to the queuine tRNA-ribosyltransferase family. As to quaternary structure, homodimer. Within each dimer, one monomer is responsible for RNA recognition and catalysis, while the other monomer binds to the replacement base PreQ1. Zn(2+) serves as cofactor.

The enzyme catalyses 7-aminomethyl-7-carbaguanine + guanosine(34) in tRNA = 7-aminomethyl-7-carbaguanosine(34) in tRNA + guanine. It participates in tRNA modification; tRNA-queuosine biosynthesis. In terms of biological role, catalyzes the base-exchange of a guanine (G) residue with the queuine precursor 7-aminomethyl-7-deazaguanine (PreQ1) at position 34 (anticodon wobble position) in tRNAs with GU(N) anticodons (tRNA-Asp, -Asn, -His and -Tyr). Catalysis occurs through a double-displacement mechanism. The nucleophile active site attacks the C1' of nucleotide 34 to detach the guanine base from the RNA, forming a covalent enzyme-RNA intermediate. The proton acceptor active site deprotonates the incoming PreQ1, allowing a nucleophilic attack on the C1' of the ribose to form the product. After dissociation, two additional enzymatic reactions on the tRNA convert PreQ1 to queuine (Q), resulting in the hypermodified nucleoside queuosine (7-(((4,5-cis-dihydroxy-2-cyclopenten-1-yl)amino)methyl)-7-deazaguanosine). This is Queuine tRNA-ribosyltransferase from Protochlamydia amoebophila (strain UWE25).